Reading from the N-terminus, the 288-residue chain is Protein CREG2 (288 aa).

The signal sequence occupies residues 1-31; sequence MSLSGRERPAWPGSRLSWLLCCSALLSPAAG. A disordered region spans residues 78–100; that stretch reads AHKEDTHLRPRGSARARPAPAAR. Residue Asn-164 is glycosylated (N-linked (GlcNAc...) asparagine).

This sequence belongs to the CREG family. In terms of tissue distribution, brain specific.

Its subcellular location is the secreted. The protein is Protein CREG2 (Creg2) of Mus musculus (Mouse).